Consider the following 432-residue polypeptide: Adenylosuccinate synthetase (432 aa).

GTP-binding positions include 12–18 (GDEGKGK) and 40–42 (GHT). The active-site Proton acceptor is the Asp-13. Residues Asp-13 and Gly-40 each coordinate Mg(2+). IMP contacts are provided by residues 13 to 16 (DEGK), 38 to 41 (NAGH), Thr-132, Arg-146, Gln-226, Thr-241, and Arg-305. His-41 functions as the Proton donor in the catalytic mechanism. 301–307 (TVTGRKR) is a binding site for substrate. Residues Arg-307, 333–335 (KLD), and 415–417 (STS) contribute to the GTP site.

The protein belongs to the adenylosuccinate synthetase family. As to quaternary structure, homodimer. Mg(2+) is required as a cofactor.

It is found in the cytoplasm. The enzyme catalyses IMP + L-aspartate + GTP = N(6)-(1,2-dicarboxyethyl)-AMP + GDP + phosphate + 2 H(+). It participates in purine metabolism; AMP biosynthesis via de novo pathway; AMP from IMP: step 1/2. In terms of biological role, plays an important role in the de novo pathway of purine nucleotide biosynthesis. Catalyzes the first committed step in the biosynthesis of AMP from IMP. The protein is Adenylosuccinate synthetase of Chelativorans sp. (strain BNC1).